We begin with the raw amino-acid sequence, 457 residues long: NADH-quinone oxidoreductase subunit D (457 aa).

Residues 1 to 23 (MSTHTETPVDGSAETITGAQPYE) are disordered.

It belongs to the complex I 49 kDa subunit family. In terms of assembly, NDH-1 is composed of 14 different subunits. Subunits NuoB, C, D, E, F, and G constitute the peripheral sector of the complex.

The protein localises to the cell membrane. It catalyses the reaction a quinone + NADH + 5 H(+)(in) = a quinol + NAD(+) + 4 H(+)(out). Functionally, NDH-1 shuttles electrons from NADH, via FMN and iron-sulfur (Fe-S) centers, to quinones in the respiratory chain. The immediate electron acceptor for the enzyme in this species is believed to be a menaquinone. Couples the redox reaction to proton translocation (for every two electrons transferred, four hydrogen ions are translocated across the cytoplasmic membrane), and thus conserves the redox energy in a proton gradient. The protein is NADH-quinone oxidoreductase subunit D of Parafrankia sp. (strain EAN1pec).